Here is an 837-residue protein sequence, read N- to C-terminus: V-type proton ATPase 116 kDa subunit a 1 (837 aa).

At 1–388 (MGELFRSEEM…DAYGIGSYRE (388 aa)) the chain is on the cytoplasmic side. The helical transmembrane segment at 389 to 407 (INPAPYTIITFPFLFAVMF) threads the bilayer. At 408–409 (GD) the chain is on the vacuolar side. A helical transmembrane segment spans residues 410-426 (FGHGILMTLFAVWMVVR). Topologically, residues 427–441 (ESRILSQKIDNELFT) are cytoplasmic. The chain crosses the membrane as a helical span at residues 442 to 471 (MMFSGRYIILLMGLFSIYTGLIYNDCFSKA). At 472–534 (LNLFGSSWSV…ATNKLTFLNS (63 aa)) the chain is on the vacuolar side. The helical transmembrane segment at 535–554 (FKMKMSVVLGIIHMTFGVAL) threads the bilayer. Over 555–572 (SLLNHIYFKKPLNIYLGF) the chain is Cytoplasmic. A helical membrane pass occupies residues 573–593 (IPEMIFMTTLFGYLVILIIYK). Residues 594–638 (WCAYDASTSMVAPSLLIHFINMFLFSYQDTSLPMLYKGQMGLQCF) are Vacuolar-facing. The chain crosses the membrane as a helical span at residues 639-658 (LVVCAIICVPWMLVVKPLIL). Over 659–724 (RRQYLRRKHL…DTVVHQAIHT (66 aa)) the chain is Cytoplasmic. A helical membrane pass occupies residues 725–749 (IEYCLGCISNTASYLRLWALSLAHA). Residues 750-770 (QLSEVLWTMVMHVGLSIRSLG) lie on the Vacuolar side of the membrane. A helical membrane pass occupies residues 771 to 809 (GGIALVFVFSAFATLTIAILLIMEGLSAFLHALRLHWVE). Over 810-837 (FQNKFYMGTGFKFLPFSFENIREGKFDE) the chain is Cytoplasmic.

It belongs to the V-ATPase 116 kDa subunit family. In terms of assembly, V-ATPase is a heteromultimeric enzyme made up of two complexes: the ATP-hydrolytic V1 complex and the proton translocation V0 complex. The V1 complex consists of three catalytic AB heterodimers that form a heterohexamer, three peripheral stalks each consisting of EG heterodimers, one central rotor including subunits D and F, and the regulatory subunits C and H. The proton translocation complex V0 consists of the proton transport subunit a, a ring of proteolipid subunits c9c'', rotary subunit d, subunits e and f, and two accessory subunits.

Its subcellular location is the cytoplasmic vesicle. The protein resides in the clathrin-coated vesicle membrane. The protein localises to the secretory vesicle. It is found in the synaptic vesicle membrane. It localises to the melanosome. Subunit of the V0 complex of vacuolar(H+)-ATPase (V-ATPase), a multisubunit enzyme composed of a peripheral complex (V1) that hydrolyzes ATP and a membrane integral complex (V0) that translocates protons. V-ATPase is responsible for acidifying and maintaining the pH of intracellular compartments and in some cell types, is targeted to the plasma membrane, where it is responsible for acidifying the extracellular environment. Required for assembly and activity of the vacuolar ATPase. This is V-type proton ATPase 116 kDa subunit a 1 (atp6v0a1) from Xenopus tropicalis (Western clawed frog).